The sequence spans 232 residues: Orotidine 5'-phosphate decarboxylase (232 aa).

Substrate is bound by residues D14, K36, 63–72 (DLKFHDIPNT), T122, R183, Q192, G212, and R213. The active-site Proton donor is the K65.

This sequence belongs to the OMP decarboxylase family. Type 1 subfamily. In terms of assembly, homodimer.

The enzyme catalyses orotidine 5'-phosphate + H(+) = UMP + CO2. Its pathway is pyrimidine metabolism; UMP biosynthesis via de novo pathway; UMP from orotate: step 2/2. In terms of biological role, catalyzes the decarboxylation of orotidine 5'-monophosphate (OMP) to uridine 5'-monophosphate (UMP). The protein is Orotidine 5'-phosphate decarboxylase of Psychrobacter arcticus (strain DSM 17307 / VKM B-2377 / 273-4).